The sequence spans 618 residues: Ubiquitin carboxyl-terminal hydrolase 2 (618 aa).

The interval M1–E213 is necessary for interaction with MDM4. Disordered regions lie at residues V54–G112 and R246–K274. The segment covering K90–E100 has biased composition (basic and acidic residues). The span at G255 to K274 shows a compositional bias: polar residues. The region spanning A280 to A612 is the USP domain. The active-site Nucleophile is C289. Residues Y416–K516 are necessary for interaction with MDM4. Positions 438, 441, 489, and 492 each coordinate Zn(2+). The active-site Proton acceptor is H570.

The protein belongs to the peptidase C19 family. USP2 subfamily. Homooligomer. Found in trimeric complex with MDM2 and MDM4 and USP2. Interacts with CCND1; the interaction is direct and promotes its stabilization by antagonizing ubiquitin-dependent degradation. Interacts (via N-terminus and C-terminus) with MDM2. Interacts with MDM4. Interacts with PER1. Interacts with KCNQ1; counteracts the NEDD4L-specific down-regulation of I(Ks) and restores plasma membrane localization of KCNQ1. Isoform 4: Interacts with NHERF4 and CLTC. Expressed in mesangial cells of the kidney. Isoform 1 and isoform 2 are expressed in elongated spermatids; the shorter form appearing earlier than the longer form (at protein level). Isoform 1 and isoform 2 are expressed in early round spermatids of the testis. Isoform 1 is expressed in muscle and heart. Isoform 2 is expressed in muscle, lung, heart, brain, liver and ovary. During muscle differentiation, isoform 1 expression increases before the onset of membrane fusion and decreases as the myogenic processes proceeded; un counterpart, isoform 2 expression remains low until the burst of membrane fusion but increases thereafter.

Its subcellular location is the cytoplasm. It is found in the perinuclear region. The protein resides in the nucleus. It localises to the membrane. The enzyme catalyses Thiol-dependent hydrolysis of ester, thioester, amide, peptide and isopeptide bonds formed by the C-terminal Gly of ubiquitin (a 76-residue protein attached to proteins as an intracellular targeting signal).. Cleavage is inhibited by ubiquitin in a dosage-dependent manner. Cleavage is blocked by ubiquitin aldehyde. Its function is as follows. Hydrolase that deubiquitinates polyubiquitinated target proteins such as MDM2, MDM4 and CCND1. Isoform 1 and isoform 2 possess both ubiquitin-specific peptidase and isopeptidase activities. Deubiquitinates MDM2 without reversing MDM2-mediated p53/TP53 ubiquitination and thus indirectly promotes p53/TP53 degradation and limits p53 activity. Has no deubiquitinase activity against p53/TP53. Prevents MDM2-mediated degradation of MDM4. Plays a role in the G1/S cell-cycle progression in normal and cancer cells. Regulates the circadian clock by modulating its intrinsic circadian rhythm and its capacity to respond to external cues. Associates with clock proteins and deubiquitinates core clock component PER1 but does not affect its overall stability. Regulates the nucleocytoplasmic shuttling and nuclear retention of PER1 and its repressive role on the clock transcription factors CLOCK and BMAL1. Plays a role in the regulation of myogenic differentiation of embryonic muscle cells. Functionally, circadian clock output effector that regulates Ca(2+) absorption in the small intestine. Probably functions by regulating protein levels of the membrane scaffold protein NHERF4 in a rhythmic manner, and is therefore likely to control Ca(2+) membrane permeability mediated by the Ca(2+) channel TRPV6 in the intestine. The polypeptide is Ubiquitin carboxyl-terminal hydrolase 2 (Usp2) (Rattus norvegicus (Rat)).